Here is a 1374-residue protein sequence, read N- to C-terminus: Probable multidrug resistance-associated protein lethal(2)03659 (1374 aa).

Positions 1 to 40 are disordered; it reads MDKQPVLEPTFDSVSERENTSIEESSLLENNGFDHRNKDE. Transmembrane regions (helical) follow at residues 159-179, 205-225, 282-302, 305-325, 404-424, and 426-446; these read LLRVFGWQLGFPGLAIFVVEL, AGFYYAVAQIVISALTVMILT, YTVHYLWVGPLQVLVITYLMY, IGISAVFGVLFMLLFMPIQMY, IFLSLVGYVILGKVFTPEIAF, and ITAYYNVLLAAMSIYVPSAII. The ABC transmembrane type-1 1 domain maps to 168 to 449; that stretch reads GFPGLAIFVV…YVPSAIIQTA (282 aa). Residues 466-492 form a disordered region; that stretch reads ELGSSDKSEGPSKDTVPGNPPSNNNEA. In terms of domain architecture, ABC transporter 1 spans 499-722; it reads ISIRDLKAKW…GLITGLGSLS (224 aa). 534–541 contributes to the ATP binding site; the sequence is GLTGSGKS. N-linked (GlcNAc...) asparagine glycosylation is present at N561. Residues 723–766 are disordered; the sequence is KTDKAKTEEQEPLNLNSPDNKNEVTPIKENSEQTVGGSSSGKEH. 5 helical membrane-spanning segments follow: residues 787-807, 845-865, 913-933, 938-958, and 1025-1045; these read GGGLVAFLVMLSSSVLAQVAV, LIIILSVIMNLSSSFLLFNIA, VVLVDVMQIALWLAGIIIVIA, LLLVPTLMLSVIFYHLRNLYL, and YCMNCICVIYISIITLSFFAF. Residues 793-1079 form the ABC transmembrane type-1 2 domain; sequence FLVMLSSSVL…GVRQTAELEN (287 aa). Positions 1119–1352 constitute an ABC transporter 2 domain; it reads FKELNLRYTP…SDSKVFHNLV (234 aa). Residue 1153–1160 participates in ATP binding; the sequence is GRTGAGKS. N-linked (GlcNAc...) asparagine glycosylation is found at N1254 and N1353.

It belongs to the ABC transporter superfamily. ABCC family. Conjugate transporter (TC 3.A.1.208) subfamily. As to expression, uniform expression in embryos.

It is found in the membrane. Vital for development. The sequence is that of Probable multidrug resistance-associated protein lethal(2)03659 (l(2)03659) from Drosophila melanogaster (Fruit fly).